Here is a 61-residue protein sequence, read N- to C-terminus: UPF0391 membrane protein Bpro_0066 (61 aa).

2 helical membrane passes run 5–25 and 33–53; these read AIIF…GVAA and ILFG…ALGV.

Belongs to the UPF0391 family.

The protein localises to the cell membrane. In Polaromonas sp. (strain JS666 / ATCC BAA-500), this protein is UPF0391 membrane protein Bpro_0066.